A 431-amino-acid polypeptide reads, in one-letter code: Acetylornithine aminotransferase (431 aa).

Pyridoxal 5'-phosphate-binding positions include 118–119 (GA) and phenylalanine 157. N(2)-acetyl-L-ornithine is bound at residue arginine 160. Residue 251 to 254 (DEVQ) participates in pyridoxal 5'-phosphate binding. Residue lysine 284 is modified to N6-(pyridoxal phosphate)lysine. Serine 313 contacts N(2)-acetyl-L-ornithine. A pyridoxal 5'-phosphate-binding site is contributed by threonine 314.

Belongs to the class-III pyridoxal-phosphate-dependent aminotransferase family. ArgD subfamily. As to quaternary structure, homodimer. The cofactor is pyridoxal 5'-phosphate.

Its subcellular location is the cytoplasm. It catalyses the reaction N(2)-acetyl-L-ornithine + 2-oxoglutarate = N-acetyl-L-glutamate 5-semialdehyde + L-glutamate. The protein operates within amino-acid biosynthesis; L-arginine biosynthesis; N(2)-acetyl-L-ornithine from L-glutamate: step 4/4. The protein is Acetylornithine aminotransferase of Bifidobacterium longum (strain NCC 2705).